A 112-amino-acid chain; its full sequence is Large ribosomal subunit protein uL22 (112 aa).

The protein belongs to the universal ribosomal protein uL22 family. As to quaternary structure, part of the 50S ribosomal subunit.

Its function is as follows. This protein binds specifically to 23S rRNA; its binding is stimulated by other ribosomal proteins, e.g. L4, L17, and L20. It is important during the early stages of 50S assembly. It makes multiple contacts with different domains of the 23S rRNA in the assembled 50S subunit and ribosome. In terms of biological role, the globular domain of the protein is located near the polypeptide exit tunnel on the outside of the subunit, while an extended beta-hairpin is found that lines the wall of the exit tunnel in the center of the 70S ribosome. The protein is Large ribosomal subunit protein uL22 of Sulfurovum sp. (strain NBC37-1).